Reading from the N-terminus, the 227-residue chain is Cytochrome c oxidase subunit 2 (227 aa).

The Mitochondrial intermembrane segment spans residues 1 to 14 (MAYPFQLGLQDATS). A helical transmembrane segment spans residues 15-45 (PIMEELMNFHDHTLMIVFLISTLVLYIISLM). The Mitochondrial matrix portion of the chain corresponds to 46–59 (LTTKLTHTSTMDAQ). The chain crosses the membrane as a helical span at residues 60-87 (EVETVWTILPAVILIMIALPSLRILYMM). The Mitochondrial intermembrane segment spans residues 88–227 (DEINNPVLTV…HFENWSTSMI (140 aa)). Cu cation contacts are provided by His161, Cys196, Glu198, Cys200, His204, and Met207. Glu198 is a Mg(2+) binding site.

The protein belongs to the cytochrome c oxidase subunit 2 family. As to quaternary structure, component of the cytochrome c oxidase (complex IV, CIV), a multisubunit enzyme composed of 14 subunits. The complex is composed of a catalytic core of 3 subunits MT-CO1, MT-CO2 and MT-CO3, encoded in the mitochondrial DNA, and 11 supernumerary subunits COX4I, COX5A, COX5B, COX6A, COX6B, COX6C, COX7A, COX7B, COX7C, COX8 and NDUFA4, which are encoded in the nuclear genome. The complex exists as a monomer or a dimer and forms supercomplexes (SCs) in the inner mitochondrial membrane with NADH-ubiquinone oxidoreductase (complex I, CI) and ubiquinol-cytochrome c oxidoreductase (cytochrome b-c1 complex, complex III, CIII), resulting in different assemblies (supercomplex SCI(1)III(2)IV(1) and megacomplex MCI(2)III(2)IV(2)). Found in a complex with TMEM177, COA6, COX18, COX20, SCO1 and SCO2. Interacts with TMEM177 in a COX20-dependent manner. Interacts with COX20. Interacts with COX16. It depends on Cu cation as a cofactor.

It localises to the mitochondrion inner membrane. The catalysed reaction is 4 Fe(II)-[cytochrome c] + O2 + 8 H(+)(in) = 4 Fe(III)-[cytochrome c] + 2 H2O + 4 H(+)(out). In terms of biological role, component of the cytochrome c oxidase, the last enzyme in the mitochondrial electron transport chain which drives oxidative phosphorylation. The respiratory chain contains 3 multisubunit complexes succinate dehydrogenase (complex II, CII), ubiquinol-cytochrome c oxidoreductase (cytochrome b-c1 complex, complex III, CIII) and cytochrome c oxidase (complex IV, CIV), that cooperate to transfer electrons derived from NADH and succinate to molecular oxygen, creating an electrochemical gradient over the inner membrane that drives transmembrane transport and the ATP synthase. Cytochrome c oxidase is the component of the respiratory chain that catalyzes the reduction of oxygen to water. Electrons originating from reduced cytochrome c in the intermembrane space (IMS) are transferred via the dinuclear copper A center (CU(A)) of subunit 2 and heme A of subunit 1 to the active site in subunit 1, a binuclear center (BNC) formed by heme A3 and copper B (CU(B)). The BNC reduces molecular oxygen to 2 water molecules using 4 electrons from cytochrome c in the IMS and 4 protons from the mitochondrial matrix. The protein is Cytochrome c oxidase subunit 2 (MT-CO2) of Apodemus semotus (Taiwan field mouse).